A 355-amino-acid chain; its full sequence is 3-dehydroquinate synthase (355 aa).

NAD(+) contacts are provided by residues 71 to 76 (EGEERK), 105 to 109 (GVVGD), 129 to 130 (TS), Lys-142, and Lys-151. Zn(2+) is bound by residues Glu-184, His-246, and His-263.

It belongs to the sugar phosphate cyclases superfamily. Dehydroquinate synthase family. Requires NAD(+) as cofactor. Co(2+) is required as a cofactor. The cofactor is Zn(2+).

It is found in the cytoplasm. The enzyme catalyses 7-phospho-2-dehydro-3-deoxy-D-arabino-heptonate = 3-dehydroquinate + phosphate. It functions in the pathway metabolic intermediate biosynthesis; chorismate biosynthesis; chorismate from D-erythrose 4-phosphate and phosphoenolpyruvate: step 2/7. In terms of biological role, catalyzes the conversion of 3-deoxy-D-arabino-heptulosonate 7-phosphate (DAHP) to dehydroquinate (DHQ). The chain is 3-dehydroquinate synthase from Streptococcus pneumoniae serotype 4 (strain ATCC BAA-334 / TIGR4).